Here is a 386-residue protein sequence, read N- to C-terminus: MTGLDMEIIFAKIKEEYARTDDVGKRQIQGHIRELQVGFYSDWDVVMRLSSGPLQVALTKVGIDLGIFRSLKESDTPITLAEIVKKTGASPRLLGRILRTQAAFGLIKETGPQEYTSSAFTDVFANSDAAGAVVQLFDISGPCTQILPDFLAERNYQDITSNKDCVFQKAFGSDLTMFEWMPQHPKHMESLGHLMALERPVSWVDHYPVLEELGGFPAPDKVLMVDIGGGFGQQSKALRAKFPDLPGRLIVQDIPQTLANAQPAAGIEFMEHNFFEPQPIQNAKFYYLRHVFHDWPDEQCVLILKQIIPAMGPESQILIDEMVIPSTGVPWQAAFTDLLMMNSLGGVERTRAEWDDLMEQVGLEIIQSKVYDSKEQAILVAVPKRT.

137 to 150 (FDISGPCTQILPDF) provides a ligand contact to substrate. Residues 177–197 (MFEWMPQHPKHMESLGHLMAL) are substrate binding. S-adenosyl-L-methionine contacts are provided by residues 228–229 (GG), Asp-253, 273–274 (NF), and Arg-289. His-293 acts as the Proton acceptor in catalysis.

This sequence belongs to the class I-like SAM-binding methyltransferase superfamily. Cation-independent O-methyltransferase family. COMT subfamily.

It catalyses the reaction 6-demethylsterigmatocystin + S-adenosyl-L-methionine = sterigmatocystin + S-adenosyl-L-homocysteine + H(+). It functions in the pathway mycotoxin biosynthesis; aflatoxin biosynthesis. Demethylsterigmatocystin 6-O-methyltransferase; part of the gene cluster that mediates the biosynthesis of aflatoxins, a group of polyketide-derived furanocoumarins, and part of the most toxic and carcinogenic compounds among the known mycotoxins. The four major aflatoxins produced by A.parasiticus are aflatoxin B1 (AFB1), aflatoxin B2 (AFB2), aflatoxin G1 (AFG1) and aflatoxin G2 (AFG2). Within the aflatoxin pathway, the methyltransferase aflO then catalyzes the modification of demethylsterigmatocystin (DMST) to sterigmatocystin (ST), and of dihydrodemethylsterigmatocystin (DMDHST) to dihydrosterigmatocystin (DHST). The biosynthesis of aflatoxins begins with the norsolorinic acid synthase aflC that combines a hexanoyl starter unit produced by the fatty acid synthase aflA/aflB and 7 malonyl-CoA extender units to synthesize the precursor NOR. The second step is the conversion of NOR to averantin and requires the norsolorinic acid ketoreductase aflD, which catalyzes the dehydration of norsolorinic acid to form (1'S)-averantin. The norsolorinic acid reductases aflE and aflF may also play a role in the conversion of NOR to AVN. The cytochrome P450 monooxygenase aflG then catalyzes the hydroxylation of AVN to 5'hydroxyaverantin (HAVN). The next step is performed by the 5'-hydroxyaverantin dehydrogenase aflH that transforms HAVN to 5'-oxoaverantin (OAVN) which is further converted to averufin (AVF) by aflK that plays a dual role in the pathway, as a 5'-oxoaverantin cyclase that mediates conversion of 5'-oxoaverantin, as well as a versicolorin B synthase in a later step in the pathway. The averufin oxidase aflI catalyzes the conversion of AVF to versiconal hemiacetal acetate (VHA). VHA is then the substrate for the versiconal hemiacetal acetate esterase aflJ to yield versiconal (VAL). Versicolorin B synthase aflK then converts VAL to versicolorin B (VERB) by closing the bisfuran ring of aflatoxin which is required for DNA-binding, thus giving to aflatoxin its activity as a mutagen. Then, the activity of the versicolorin B desaturase aflL leads to versicolorin A (VERA). A branch point starts from VERB since it can also be converted to dihydrodemethylsterigmatocystin (DMDHST), probably also by aflL, VERA being a precursor for aflatoxins B1 and G1, and DMDHST for aflatoxins B2 and G2. Next, the versicolorin reductase aflM and the cytochrome P450 monooxygenase aflN are involved in conversion of VERA to demethylsterigmatocystin (DMST). AflX and aflY seem also involved in this step, through probable aflX-mediated epoxide ring-opening step following versicolorin A oxidation and aflY-mediated Baeyer-Villiger oxidation required for the formation of the xanthone ring. The methyltransferase aflO then leads to the modification of DMST to sterigmatocystin (ST), and of DMDHST to dihydrosterigmatocystin (DHST). Both ST and DHST are then substrates of the O-methyltransferase aflP to yield O-methylsterigmatocystin (OMST) and dihydro-O-methylsterigmatocystin (DHOMST), respectively. Finally OMST is converted to aflatoxins B1 and G1, and DHOMST to aflatoxins B2 and G2, via the action of several enzymes including O-methylsterigmatocystin oxidoreductase aflQ, the cytochrome P450 monooxygenase aflU, but also the NADH-dependent flavin oxidoreductase nadA which is specifically required for the synthesis of AFG1. This is Demethylsterigmatocystin 6-O-methyltransferase from Aspergillus parasiticus (strain ATCC 56775 / NRRL 5862 / SRRC 143 / SU-1).